The following is a 315-amino-acid chain: Ribosomal RNA small subunit methyltransferase H (315 aa).

S-adenosyl-L-methionine contacts are provided by residues 37–39 (GGH), Asp-57, Phe-83, Asp-105, and Gln-112.

Belongs to the methyltransferase superfamily. RsmH family.

Its subcellular location is the cytoplasm. It carries out the reaction cytidine(1402) in 16S rRNA + S-adenosyl-L-methionine = N(4)-methylcytidine(1402) in 16S rRNA + S-adenosyl-L-homocysteine + H(+). Specifically methylates the N4 position of cytidine in position 1402 (C1402) of 16S rRNA. The protein is Ribosomal RNA small subunit methyltransferase H of Pseudomonas putida (strain GB-1).